Here is a 254-residue protein sequence, read N- to C-terminus: Imidazole glycerol phosphate synthase subunit HisF (254 aa).

Catalysis depends on residues D11 and D130.

It belongs to the HisA/HisF family. As to quaternary structure, heterodimer of HisH and HisF.

The protein resides in the cytoplasm. It catalyses the reaction 5-[(5-phospho-1-deoxy-D-ribulos-1-ylimino)methylamino]-1-(5-phospho-beta-D-ribosyl)imidazole-4-carboxamide + L-glutamine = D-erythro-1-(imidazol-4-yl)glycerol 3-phosphate + 5-amino-1-(5-phospho-beta-D-ribosyl)imidazole-4-carboxamide + L-glutamate + H(+). Its pathway is amino-acid biosynthesis; L-histidine biosynthesis; L-histidine from 5-phospho-alpha-D-ribose 1-diphosphate: step 5/9. IGPS catalyzes the conversion of PRFAR and glutamine to IGP, AICAR and glutamate. The HisF subunit catalyzes the cyclization activity that produces IGP and AICAR from PRFAR using the ammonia provided by the HisH subunit. The polypeptide is Imidazole glycerol phosphate synthase subunit HisF (Chromobacterium violaceum (strain ATCC 12472 / DSM 30191 / JCM 1249 / CCUG 213 / NBRC 12614 / NCIMB 9131 / NCTC 9757 / MK)).